Consider the following 500-residue polypeptide: Cholesterol 24-hydroxylase (500 aa).

The helical transmembrane segment at 3-23 threads the bilayer; that stretch reads PGLLLLGSAVLLAFGLCCTFV. Cys-437 provides a ligand contact to heme.

It belongs to the cytochrome P450 family. The cofactor is heme. Expressed in brain. The mRNA was broadly distributed with higher levels in gray matter zones and lower levels in regions rich in white matter. Not detected in fetal sample but its expression increases linearly with age.

Its subcellular location is the endoplasmic reticulum membrane. It localises to the microsome membrane. The protein resides in the postsynapse. The protein localises to the presynapse. It is found in the cell projection. Its subcellular location is the dendrite. The catalysed reaction is cholesterol + reduced [NADPH--hemoprotein reductase] + O2 = (24S)-hydroxycholesterol + oxidized [NADPH--hemoprotein reductase] + H2O + H(+). The enzyme catalyses cholestanol + reduced [NADPH--hemoprotein reductase] + O2 = (24S)-hydroxycholestanol + oxidized [NADPH--hemoprotein reductase] + H2O + H(+). It catalyses the reaction 7-dehydrocholesterol + reduced [NADPH--hemoprotein reductase] + O2 = cholesta-5,7-dien-3beta,24S-diol + oxidized [NADPH--hemoprotein reductase] + H2O + H(+). It carries out the reaction 7-dehydrocholesterol + reduced [NADPH--hemoprotein reductase] + O2 = cholesta-5,7-dien-3beta,25-diol + oxidized [NADPH--hemoprotein reductase] + H2O + H(+). The catalysed reaction is desmosterol + reduced [NADPH--hemoprotein reductase] + O2 = (24Z),26-hydroxydesmosterol + oxidized [NADPH--hemoprotein reductase] + H2O + H(+). The enzyme catalyses desmosterol + reduced [NADPH--hemoprotein reductase] + O2 = (24S)-25-epoxycholesterol + oxidized [NADPH--hemoprotein reductase] + H2O + H(+). It catalyses the reaction 4beta-hydroxycholesterol + reduced [NADPH--hemoprotein reductase] + O2 = 4beta,24S-dihydroxycholesterol + oxidized [NADPH--hemoprotein reductase] + H2O + H(+). It carries out the reaction (24S)-hydroxycholesterol + reduced [NADPH--hemoprotein reductase] + O2 = (24S,25R)-24,26-dihydroxycholesterol + oxidized [NADPH--hemoprotein reductase] + H2O + H(+). The catalysed reaction is (24S)-hydroxycholesterol + reduced [NADPH--hemoprotein reductase] + O2 = 24S,25-dihydroxycholesterol + oxidized [NADPH--hemoprotein reductase] + H2O + H(+). The enzyme catalyses 7alpha-hydroxycholesterol + reduced [NADPH--hemoprotein reductase] + O2 = (24S)-7alpha-dihydroxycholesterol + oxidized [NADPH--hemoprotein reductase] + H2O + H(+). It catalyses the reaction progesterone + reduced [NADPH--hemoprotein reductase] + O2 = 17alpha-hydroxyprogesterone + oxidized [NADPH--hemoprotein reductase] + H2O + H(+). It carries out the reaction testosterone + reduced [NADPH--hemoprotein reductase] + O2 = 16beta,17beta-dihydroxyandrost-4-en-3-one + oxidized [NADPH--hemoprotein reductase] + H2O + H(+). The catalysed reaction is testosterone + reduced [NADPH--hemoprotein reductase] + O2 = 2-hydroxytestosterone + oxidized [NADPH--hemoprotein reductase] + H2O + H(+). The enzyme catalyses testosterone + reduced [NADPH--hemoprotein reductase] + O2 = 6beta,17beta-dihydroxyandrost-4-en-3-one + oxidized [NADPH--hemoprotein reductase] + H2O + H(+). It participates in steroid metabolism; cholesterol degradation. The protein operates within lipid metabolism; C21-steroid hormone metabolism. P450 monooxygenase that plays a major role in cholesterol homeostasis in the brain. Primarily catalyzes the hydroxylation (with S stereochemistry) at C-24 of cholesterol side chain, triggering cholesterol diffusion out of neurons and its further degradation. By promoting constant cholesterol elimination in neurons, may activate the mevalonate pathway and coordinate the synthesis of new cholesterol and nonsterol isoprenoids involved in synaptic activity and learning. Further hydroxylates cholesterol derivatives and hormone steroids on both the ring and side chain of these molecules, converting them into active oxysterols involved in lipid signaling and biosynthesis. Acts as an epoxidase converting cholesta-5,24-dien-3beta-ol/desmosterol into (24S),25-epoxycholesterol, an abundant lipid ligand of nuclear NR1H2 and NR1H3 receptors shown to promote neurogenesis in developing brain. May also catalyze the oxidative metabolism of xenobiotics, such as clotrimazole. The protein is Cholesterol 24-hydroxylase of Homo sapiens (Human).